A 383-amino-acid polypeptide reads, in one-letter code: Succinyl-diaminopimelate desuccinylase (383 aa).

H74 contributes to the Zn(2+) binding site. The active site involves D76. Residue D107 coordinates Zn(2+). The Proton acceptor role is filled by E141. Zn(2+) contacts are provided by E142, E170, and H356.

The protein belongs to the peptidase M20A family. DapE subfamily. Homodimer. Requires Zn(2+) as cofactor. Co(2+) serves as cofactor.

It catalyses the reaction N-succinyl-(2S,6S)-2,6-diaminopimelate + H2O = (2S,6S)-2,6-diaminopimelate + succinate. It participates in amino-acid biosynthesis; L-lysine biosynthesis via DAP pathway; LL-2,6-diaminopimelate from (S)-tetrahydrodipicolinate (succinylase route): step 3/3. Its function is as follows. Catalyzes the hydrolysis of N-succinyl-L,L-diaminopimelic acid (SDAP), forming succinate and LL-2,6-diaminopimelate (DAP), an intermediate involved in the bacterial biosynthesis of lysine and meso-diaminopimelic acid, an essential component of bacterial cell walls. The polypeptide is Succinyl-diaminopimelate desuccinylase (Polynucleobacter necessarius subsp. necessarius (strain STIR1)).